Here is a 274-residue protein sequence, read N- to C-terminus: 2,3,4,5-tetrahydropyridine-2,6-dicarboxylate N-succinyltransferase (274 aa).

The protein belongs to the transferase hexapeptide repeat family.

It is found in the cytoplasm. The catalysed reaction is (S)-2,3,4,5-tetrahydrodipicolinate + succinyl-CoA + H2O = (S)-2-succinylamino-6-oxoheptanedioate + CoA. It functions in the pathway amino-acid biosynthesis; L-lysine biosynthesis via DAP pathway; LL-2,6-diaminopimelate from (S)-tetrahydrodipicolinate (succinylase route): step 1/3. This is 2,3,4,5-tetrahydropyridine-2,6-dicarboxylate N-succinyltransferase from Salmonella heidelberg (strain SL476).